We begin with the raw amino-acid sequence, 485 residues long: Glutamyl-tRNA(Gln) amidotransferase subunit A (485 aa).

Catalysis depends on charge relay system residues lysine 78 and serine 153. The Acyl-ester intermediate role is filled by serine 177.

The protein belongs to the amidase family. GatA subfamily. Heterotrimer of A, B and C subunits.

The catalysed reaction is L-glutamyl-tRNA(Gln) + L-glutamine + ATP + H2O = L-glutaminyl-tRNA(Gln) + L-glutamate + ADP + phosphate + H(+). Allows the formation of correctly charged Gln-tRNA(Gln) through the transamidation of misacylated Glu-tRNA(Gln) in organisms which lack glutaminyl-tRNA synthetase. The reaction takes place in the presence of glutamine and ATP through an activated gamma-phospho-Glu-tRNA(Gln). This Geobacter metallireducens (strain ATCC 53774 / DSM 7210 / GS-15) protein is Glutamyl-tRNA(Gln) amidotransferase subunit A.